The primary structure comprises 164 residues: HTH-type transcriptional regulator IscR (164 aa).

The region spanning 2-131 (RLTSKGRYAV…NNITLGELVN (130 aa)) is the HTH rrf2-type domain. Positions 28–51 (LADISERQGISLSYLEQLFSRLRK) form a DNA-binding region, H-T-H motif. Residues Cys92, Cys98, and Cys104 each coordinate [2Fe-2S] cluster.

[2Fe-2S] cluster is required as a cofactor.

Its function is as follows. Regulates the transcription of several operons and genes involved in the biogenesis of Fe-S clusters and Fe-S-containing proteins. The chain is HTH-type transcriptional regulator IscR from Salmonella choleraesuis (strain SC-B67).